A 281-amino-acid polypeptide reads, in one-letter code: Pantothenate synthetase (281 aa).

Residue 30–37 coordinates ATP; the sequence is MGYLHEGH. His37 (proton donor) is an active-site residue. Gln61 lines the (R)-pantoate pocket. Residue Gln61 participates in beta-alanine binding. Residue 147–150 participates in ATP binding; the sequence is GQKD. Gln153 contacts (R)-pantoate. ATP contacts are provided by residues Val176 and 184 to 187; that span reads MSSR.

It belongs to the pantothenate synthetase family. Homodimer.

The protein resides in the cytoplasm. It carries out the reaction (R)-pantoate + beta-alanine + ATP = (R)-pantothenate + AMP + diphosphate + H(+). It functions in the pathway cofactor biosynthesis; (R)-pantothenate biosynthesis; (R)-pantothenate from (R)-pantoate and beta-alanine: step 1/1. Catalyzes the condensation of pantoate with beta-alanine in an ATP-dependent reaction via a pantoyl-adenylate intermediate. This is Pantothenate synthetase from Heliobacterium modesticaldum (strain ATCC 51547 / Ice1).